A 353-amino-acid polypeptide reads, in one-letter code: Guanine nucleotide-binding protein G(q) subunit alpha (353 aa).

Residues Cys3 and Cys4 are each lipidated (S-palmitoyl cysteine). The G-alpha domain occupies 32 to 353 (RELKLLLLGT…QLNLKEYNLV (322 aa)). Positions 35-48 (KLLLLGTGESGKST) are G1 motif. Residues 40–47 (GTGESGKS), 174–180 (LRVRVPT), 199–203 (DVGGQ), 268–271 (NKKD), and Ala325 each bind GTP. Positions 47 and 180 each coordinate Mg(2+). The tract at residues 172–180 (DILRVRVPT) is G2 motif. Residues 195–204 (FRMVDVGGQR) are G3 motif. The G4 motif stretch occupies residues 264–271 (ILFLNKKD). The interval 323–328 (TCATDT) is G5 motif.

Belongs to the G-alpha family. G(q) subfamily. G proteins are composed of 3 units; alpha, beta and gamma. The alpha chain contains the guanine nucleotide binding site.

Guanine nucleotide-binding proteins (G proteins) are involved as modulators or transducers in various transmembrane signaling systems. In Mizuhopecten yessoensis (Japanese scallop), this protein is Guanine nucleotide-binding protein G(q) subunit alpha (SCGQA).